The following is a 276-amino-acid chain: Octanoyltransferase LipM (276 aa).

One can recognise a BPL/LPL catalytic domain in the interval 31-246 (GKVPPTVRFY…GFASGLEVEL (216 aa)). Cysteine 148 serves as the catalytic Acyl-thioester intermediate.

It belongs to the octanoyltransferase LipM family. In terms of assembly, monomer.

It carries out the reaction octanoyl-[ACP] + L-lysyl-[protein] = N(6)-octanoyl-L-lysyl-[protein] + holo-[ACP] + H(+). It functions in the pathway protein modification; protein lipoylation via endogenous pathway; protein N(6)-(lipoyl)lysine from octanoyl-[acyl-carrier-protein]. Its function is as follows. Catalyzes the transfer of endogenously produced octanoic acid from octanoyl-acyl-carrier-protein onto the lipoyl domain of GcvH, an intermediate carrier during protein lipoylation. This is Octanoyltransferase LipM from Brevibacillus brevis (strain 47 / JCM 6285 / NBRC 100599).